A 425-amino-acid chain; its full sequence is MADIIHVMAREILDSRGNPTVEAEVFLDDGARGVAGVPSGASTGVHEAHELRDGGDRYLGKGVLKAVENVNEEIADELAGFEADDQRLIDQALIKLDGTENKSRLGANAILGVSIAAAKAAAESAGLPLYRYVGGPNAHVLPVPMMNIVNGGAHADSGVDVQEFMIAPIGAESFSEALRIGAEVYHALKSVIKSKGLSTGLGDEGGFAPEAESTKAALDLIIEAIKKAGFEPGKDVALALDVASSEFFKDGKYHFEGGEHTAEEMAKVYEELVAKYPIVSIEDPLQEDDWEGYTKLTETLGDKVQIVGDDFFVTNPARLQEGIDKKAANALLVKVNQIGTLTETFDAVELAHRNGYRTMMSHRSGETEDTTIADLAVALNCGQIKTGAPARSERVAKYNQLLRIEQELGDAAVYAGRSAFPRFQG.

Position 162 (Gln162) interacts with (2R)-2-phosphoglycerate. Glu204 acts as the Proton donor in catalysis. Mg(2+) is bound by residues Asp241, Glu282, and Asp309. 4 residues coordinate (2R)-2-phosphoglycerate: Lys334, Arg363, Ser364, and Lys385. The Proton acceptor role is filled by Lys334.

Belongs to the enolase family. Mg(2+) serves as cofactor.

Its subcellular location is the cytoplasm. It is found in the secreted. It localises to the cell surface. It carries out the reaction (2R)-2-phosphoglycerate = phosphoenolpyruvate + H2O. The protein operates within carbohydrate degradation; glycolysis; pyruvate from D-glyceraldehyde 3-phosphate: step 4/5. Catalyzes the reversible conversion of 2-phosphoglycerate (2-PG) into phosphoenolpyruvate (PEP). It is essential for the degradation of carbohydrates via glycolysis. The protein is Enolase of Corynebacterium aurimucosum (strain ATCC 700975 / DSM 44827 / CIP 107346 / CN-1) (Corynebacterium nigricans).